A 96-amino-acid polypeptide reads, in one-letter code: Large ribosomal subunit protein eL43 (96 aa).

Positions 41, 44, 59, and 62 each coordinate Zn(2+). Residues 41–62 (CPVCAFPKLKRAGTSIWVCEKC) form a C4-type zinc finger.

This sequence belongs to the eukaryotic ribosomal protein eL43 family. Putative zinc-binding subfamily. As to quaternary structure, part of the 50S ribosomal subunit. Zn(2+) is required as a cofactor.

Its function is as follows. Binds to the 23S rRNA. The chain is Large ribosomal subunit protein eL43 from Methanococcus maripaludis (strain DSM 14266 / JCM 13030 / NBRC 101832 / S2 / LL).